The sequence spans 318 residues: tRNA methyltransferase 10 homolog B (318 aa).

Positions 1–10 (MDCKSEESAQ) are enriched in basic and acidic residues. Residues 1–105 (MDCKSEESAQ…DPGNGTCPQH (105 aa)) are disordered. Over residues 52 to 63 (SPANSAVWSSKN) the composition is skewed to polar residues. The segment covering 64–83 (MQRKQRHWERIVSSKKSKRK) has biased composition (basic residues). A coiled-coil region spans residues 72-93 (ERIVSSKKSKRKQERERRKAKR). Positions 84–96 (QERERRKAKRAED) are enriched in basic and acidic residues. The SAM-dependent MTase TRM10-type domain occupies 114 to 311 (TKEKLLEAKH…KGVSPGKGYV (198 aa)).

The protein belongs to the class IV-like SAM-binding methyltransferase superfamily. TRM10 family.

The enzyme catalyses guanosine(9) in tRNA + S-adenosyl-L-methionine = N(1)-methylguanosine(9) in tRNA + S-adenosyl-L-homocysteine + H(+). Functionally, S-adenosyl-L-methionine-dependent guanine N(1)-methyltransferase that catalyzes the formation of N(1)-methylguanine at position 9 (m1G9) in tRNAs. Probably not able to catalyze formation of N(1)-methyladenine at position 9 (m1A9) in tRNAs. The protein is tRNA methyltransferase 10 homolog B (Trmt10b) of Mus musculus (Mouse).